Consider the following 407-residue polypeptide: Methylthioribose-1-phosphate isomerase (407 aa).

Residue D275 is the Proton donor of the active site.

It belongs to the eIF-2B alpha/beta/delta subunits family. MtnA subfamily.

Its subcellular location is the cytoplasm. The protein localises to the nucleus. The enzyme catalyses 5-(methylsulfanyl)-alpha-D-ribose 1-phosphate = 5-(methylsulfanyl)-D-ribulose 1-phosphate. The protein operates within amino-acid biosynthesis; L-methionine biosynthesis via salvage pathway; L-methionine from S-methyl-5-thio-alpha-D-ribose 1-phosphate: step 1/6. Functionally, catalyzes the interconversion of methylthioribose-1-phosphate (MTR-1-P) into methylthioribulose-1-phosphate (MTRu-1-P). This Kluyveromyces lactis (strain ATCC 8585 / CBS 2359 / DSM 70799 / NBRC 1267 / NRRL Y-1140 / WM37) (Yeast) protein is Methylthioribose-1-phosphate isomerase.